The following is a 256-amino-acid chain: Acetylglutamate kinase (256 aa).

Substrate is bound by residues 40–41, R62, and N154; that span reads GG.

Belongs to the acetylglutamate kinase family. ArgB subfamily.

Its subcellular location is the cytoplasm. The enzyme catalyses N-acetyl-L-glutamate + ATP = N-acetyl-L-glutamyl 5-phosphate + ADP. It participates in amino-acid biosynthesis; L-arginine biosynthesis; N(2)-acetyl-L-ornithine from L-glutamate: step 2/4. Functionally, catalyzes the ATP-dependent phosphorylation of N-acetyl-L-glutamate. This chain is Acetylglutamate kinase, found in Staphylococcus aureus (strain MRSA252).